A 512-amino-acid polypeptide reads, in one-letter code: ATP synthase subunit alpha (512 aa).

169–176 contacts ATP; the sequence is GDRQTGKT.

It belongs to the ATPase alpha/beta chains family. F-type ATPases have 2 components, CF(1) - the catalytic core - and CF(0) - the membrane proton channel. CF(1) has five subunits: alpha(3), beta(3), gamma(1), delta(1), epsilon(1). CF(0) has four main subunits: a(1), b(1), b'(1) and c(9-12).

The protein resides in the cell inner membrane. The catalysed reaction is ATP + H2O + 4 H(+)(in) = ADP + phosphate + 5 H(+)(out). Functionally, produces ATP from ADP in the presence of a proton gradient across the membrane. The alpha chain is a regulatory subunit. This is ATP synthase subunit alpha from Cereibacter sphaeroides (strain ATCC 17025 / ATH 2.4.3) (Rhodobacter sphaeroides).